The chain runs to 473 residues: Probable DNA N(6)-methyladenine demethylase ALKBH1B (473 aa).

357–359 (NFY) is a 2-oxoglutarate binding site. Fe cation contacts are provided by histidine 368, aspartate 391, and histidine 449. 461 to 465 (RLFFR) provides a ligand contact to 2-oxoglutarate.

This sequence belongs to the alkB family. The cofactor is Fe(2+). As to expression, undetectable.

It catalyses the reaction an N(6)-methyl-2'-deoxyadenosine in DNA + 2-oxoglutarate + O2 = a 2'-deoxyadenosine in DNA + formaldehyde + succinate + CO2. In terms of biological role, dioxygenase that may catalyzes DNA N(6)-methyladenine (6 mA) demethylation. Requires molecular oxygen, alpha-ketoglutarate and iron. This chain is Probable DNA N(6)-methyladenine demethylase ALKBH1B, found in Arabidopsis thaliana (Mouse-ear cress).